The following is a 473-amino-acid chain: PEP-dependent dihydroxyacetone kinase, phosphoryl donor subunit DhaM (473 aa).

In terms of domain architecture, PTS EIIA type-4 spans 1-137; the sequence is MVNLVIVSHS…LAAKQAQLGI (137 aa). His-9 functions as the Tele-phosphohistidine intermediate in the catalytic mechanism. The region spanning 155–242 is the HPr domain; that stretch reads ARSVTVTIRN…SLAAEDFGEH (88 aa). Residue His-169 is the Pros-phosphohistidine intermediate of the active site. The PTS EI-like, N-terminal part stretch occupies residues 266-472; the sequence is PLPLAQPARH…IDPAAQRVSC (207 aa). His-432 functions as the Tele-phosphohistidine intermediate in the catalytic mechanism.

Belongs to the PEP-utilizing enzyme family. Homodimer. The dihydroxyacetone kinase complex is composed of a homodimer of DhaM, a homodimer of DhaK and the subunit DhaL.

The catalysed reaction is dihydroxyacetone + phosphoenolpyruvate = dihydroxyacetone phosphate + pyruvate. Its function is as follows. Component of the dihydroxyacetone kinase complex, which is responsible for the phosphoenolpyruvate (PEP)-dependent phosphorylation of dihydroxyacetone. DhaM serves as the phosphoryl donor. Is phosphorylated by phosphoenolpyruvate in an EI- and HPr-dependent reaction, and a phosphorelay system on histidine residues finally leads to phosphoryl transfer to DhaL and dihydroxyacetone. This Pantoea ananatis (strain LMG 20103) protein is PEP-dependent dihydroxyacetone kinase, phosphoryl donor subunit DhaM.